We begin with the raw amino-acid sequence, 379 residues long: MAKRDYYEVLGISKDASKDEIKKAYRKLSKKYHPDINKEEGADEKFKEISEAYEVLSDDNKRATIDQFGHDGPQGFGGQGFNGSDFGGFSGFGGGGFEDIFSSFFGGGSQRDPNAPQKGDDLQYTMTLTFEEAVFGTTKEISIRKDVTCETCHGDGAKPGTSKKTCSYCNGAGHVAVEQNTILGRVRTEQVCPKCNGSGQEFEEACPTCHGKGTENKTVKLEVKVPEGVDNEQQIRLAGEGSPGVNGGPAGDLYVVFRVKPSETFKRDGDDIYYKLNVSFPQAALGDEIKIPTLNNEVMLTIPAGTQTGKQFRLKEKGIKNVHGYGYGDLYVDIKVVTPTKLTDRQKELMKEFAQLNGEEINEQPSNFKDRAKRFFKGE.

The 65-residue stretch at 5–69 (DYYEVLGISK…NKRATIDQFG (65 aa)) folds into the J domain. Residues 136–218 (GTTKEISIRK…CHGKGTENKT (83 aa)) form a CR-type zinc finger. Positions 149, 152, 166, 169, 192, 195, 206, and 209 each coordinate Zn(2+). CXXCXGXG motif repeat units follow at residues 149 to 156 (CETCHGDG), 166 to 173 (CSYCNGAG), 192 to 199 (CPKCNGSG), and 206 to 213 (CPTCHGKG).

This sequence belongs to the DnaJ family. As to quaternary structure, homodimer. It depends on Zn(2+) as a cofactor.

It localises to the cytoplasm. Participates actively in the response to hyperosmotic and heat shock by preventing the aggregation of stress-denatured proteins and by disaggregating proteins, also in an autonomous, DnaK-independent fashion. Unfolded proteins bind initially to DnaJ; upon interaction with the DnaJ-bound protein, DnaK hydrolyzes its bound ATP, resulting in the formation of a stable complex. GrpE releases ADP from DnaK; ATP binding to DnaK triggers the release of the substrate protein, thus completing the reaction cycle. Several rounds of ATP-dependent interactions between DnaJ, DnaK and GrpE are required for fully efficient folding. Also involved, together with DnaK and GrpE, in the DNA replication of plasmids through activation of initiation proteins. In Staphylococcus aureus, this protein is Chaperone protein DnaJ.